A 381-amino-acid chain; its full sequence is Subtilisin E (381 aa).

An N-terminal signal peptide occupies residues 1 to 29 (MRSKKLWISLLFALTLIFTMAFSNMSAQA). Residues 30-106 (AGKSSTEKKY…VEEDHIAHEY (77 aa)) constitute a propeptide that is removed on maturation. One can recognise an Inhibitor I9 domain in the interval 38-103 (KYIVGFKQTM…VAYVEEDHIA (66 aa)). Glutamine 108 contributes to the Ca(2+) binding site. One can recognise a Peptidase S8 domain in the interval 111–380 (PYGISQIKAP…KGLINVQAAA (270 aa)). Aspartate 138 serves as the catalytic Charge relay system. Aspartate 147 serves as a coordination point for Ca(2+). The Charge relay system role is filled by histidine 170. Ca(2+)-binding residues include leucine 181, asparagine 183, isoleucine 185, valine 187, alanine 275, tyrosine 277, threonine 280, and aspartate 303. Catalysis depends on serine 327, which acts as the Charge relay system.

This sequence belongs to the peptidase S8 family. It depends on Ca(2+) as a cofactor.

It localises to the secreted. It catalyses the reaction Hydrolysis of proteins with broad specificity for peptide bonds, and a preference for a large uncharged residue in P1. Hydrolyzes peptide amides.. With respect to regulation, inhibited by PMSF (phenylmethylsulphonyl fluoride) and 3,4-dichloroisocoumarin but not by EDTA (shown for strain RT-5). Functionally, an extracellular alkaline serine protease, it catalyzes the hydrolysis of proteins and peptide amides. The polypeptide is Subtilisin E (Bacillus subtilis (strain 168)).